We begin with the raw amino-acid sequence, 285 residues long: Probable endonuclease 4 (285 aa).

Zn(2+)-binding residues include His69, His109, Glu145, Asp179, His182, His216, Asp229, His231, and Glu261.

The protein belongs to the AP endonuclease 2 family. Requires Zn(2+) as cofactor.

It catalyses the reaction Endonucleolytic cleavage to 5'-phosphooligonucleotide end-products.. In terms of biological role, endonuclease IV plays a role in DNA repair. It cleaves phosphodiester bonds at apurinic or apyrimidinic (AP) sites, generating a 3'-hydroxyl group and a 5'-terminal sugar phosphate. In Shigella boydii serotype 4 (strain Sb227), this protein is Probable endonuclease 4.